The following is a 178-amino-acid chain: Large ribosomal subunit protein bL17 (178 aa).

This sequence belongs to the bacterial ribosomal protein bL17 family. In terms of assembly, part of the 50S ribosomal subunit. Contacts protein L32.

This chain is Large ribosomal subunit protein bL17, found in Lachnospira eligens (strain ATCC 27750 / DSM 3376 / VPI C15-48 / C15-B4) (Eubacterium eligens).